Here is a 450-residue protein sequence, read N- to C-terminus: Sensor histidine kinase EnvZ (450 aa).

Over 1–15 (MRRMRFSPRSSFART) the chain is Cytoplasmic. Residues 16-35 (LLLIVTLLFVSLVTTYLVVL) form a helical membrane-spanning segment. At 36-158 (NFAILPSLQQ…LTEIHQGDFS (123 aa)) the chain is on the periplasmic side. A helical transmembrane segment spans residues 159 to 179 (PLFRYTLAIMLLAIGGAWLFI). The HAMP domain maps to 180–232 (RIQNRPLVDLEHAALQVGKGIIPPPLREYGASEVRSVTRAFNHMAAGVKQLAD). The Cytoplasmic portion of the chain corresponds to 180–450 (RIQNRPLVDL…ARVQGTTKEA (271 aa)). The tract at residues 223–289 (MAAGVKQLAD…IIEQFIDYLR (67 aa)) is cytoplasmic dimerization domain (CDD), when dimerized forms osmosensitive core. One can recognise a Histidine kinase domain in the interval 240–440 (GVSHDLRTPL…SIRAWLPVPV (201 aa)). ATP-binding positions include His243, 347–351 (NAARY), Asp373, 392–393 (RG), and 402–406 (TGLGL). His243 carries the post-translational modification Phosphohistidine; by autocatalysis.

As to quaternary structure, homodimer. Autophosphorylated.

The protein resides in the cell inner membrane. The catalysed reaction is ATP + protein L-histidine = ADP + protein N-phospho-L-histidine.. Member of the two-component regulatory system EnvZ/OmpR involved in regulating expression of the outer membrane porins OmpC and OmpF as well as other genes. Unlike E.coli or S.typhimurium both porins are expressed constitutively. Involved in regulation of the biosynthesis of Vi polysaccharide, a capsular antigen thought to be involved in the virulence of S.typhi. Vi antigen is synthesized at low NaCl concentrations (under 0.4 M). EnvZ functions as a membrane-associated protein kinase that phosphorylates OmpR in response to environmental signals. The sequence is that of Sensor histidine kinase EnvZ (envZ) from Salmonella typhi.